A 421-amino-acid chain; its full sequence is D-amino acid dehydrogenase (421 aa).

Position 3-17 (3-17 (VLILGSGVIGVTSAY)) interacts with FAD.

The protein belongs to the DadA oxidoreductase family. FAD serves as cofactor.

It carries out the reaction a D-alpha-amino acid + A + H2O = a 2-oxocarboxylate + AH2 + NH4(+). Its function is as follows. Oxidative deamination of D-amino acids. This Bradyrhizobium diazoefficiens (strain JCM 10833 / BCRC 13528 / IAM 13628 / NBRC 14792 / USDA 110) protein is D-amino acid dehydrogenase.